A 429-amino-acid polypeptide reads, in one-letter code: Cell wall protein ECM33 (429 aa).

The signal sequence occupies residues 1–19 (MQFKNALTATAILSASALA). Asn21, Asn56, Asn82, Asn196, Asn209, Asn227, Asn234, Asn241, Asn267, Asn279, Asn304, and Asn328 each carry an N-linked (GlcNAc...) asparagine glycan. Ser339 bears the Phosphoserine mark. Residues 361 to 401 (LSSTSTESSKSSATSSASSSGDASNAQASVSASASSSSSSS) show a composition bias toward low complexity. The disordered stretch occupies residues 361-410 (LSSTSTESSKSSATSSASSSGDASNAQASVSASASSSSSSSKKSKGAAPE). Residue Gly406 is the site of GPI-anchor amidated glycine attachment. A propeptide spans 407–429 (AAPELVPATSFMGVVAAVAVALL) (removed in mature form).

The protein belongs to the SPS2 family. The GPI-anchor is attached to the protein in the endoplasmic reticulum and serves to target the protein to the cell surface. There, the glucosamine-inositol phospholipid moiety is cleaved off and the GPI-modified mannoprotein is covalently attached via its lipidless GPI glycan remnant to the 1,6-beta-glucan of the outer cell wall layer.

It is found in the cell membrane. It localises to the secreted. Its subcellular location is the cell wall. In terms of biological role, required for proper cell wall integrity and for the correct assembly of the mannoprotein outer layer of the cell wall. Important for apical bud growth. The chain is Cell wall protein ECM33 (ECM33) from Saccharomyces cerevisiae (strain YJM789) (Baker's yeast).